Consider the following 182-residue polypeptide: Probable inosine/xanthosine triphosphatase (182 aa).

Glu-65 contacts Mg(2+). Residue 65 to 66 coordinates substrate; sequence EA.

This sequence belongs to the YjjX NTPase family. Homodimer. Requires Mg(2+) as cofactor. Mn(2+) is required as a cofactor.

The catalysed reaction is XTP + H2O = XDP + phosphate + H(+). It catalyses the reaction ITP + H2O = IDP + phosphate + H(+). In terms of biological role, phosphatase that hydrolyzes non-canonical purine nucleotides such as XTP and ITP to their respective diphosphate derivatives. Probably excludes non-canonical purines from DNA/RNA precursor pool, thus preventing their incorporation into DNA/RNA and avoiding chromosomal lesions. This chain is Probable inosine/xanthosine triphosphatase, found in Pyrobaculum neutrophilum (strain DSM 2338 / JCM 9278 / NBRC 100436 / V24Sta) (Thermoproteus neutrophilus).